The sequence spans 212 residues: Protein GrpE (212 aa).

The interval 1-69 is disordered; that stretch reads MAEMSNNKTS…LESAKKEIES (69 aa). The span at 40–60 shows a compositional bias: low complexity; the sequence is ETTQTESMETAETETSLQTEL.

The protein belongs to the GrpE family. As to quaternary structure, homodimer.

The protein localises to the cytoplasm. Participates actively in the response to hyperosmotic and heat shock by preventing the aggregation of stress-denatured proteins, in association with DnaK and GrpE. It is the nucleotide exchange factor for DnaK and may function as a thermosensor. Unfolded proteins bind initially to DnaJ; upon interaction with the DnaJ-bound protein, DnaK hydrolyzes its bound ATP, resulting in the formation of a stable complex. GrpE releases ADP from DnaK; ATP binding to DnaK triggers the release of the substrate protein, thus completing the reaction cycle. Several rounds of ATP-dependent interactions between DnaJ, DnaK and GrpE are required for fully efficient folding. This Leptospira interrogans serogroup Icterohaemorrhagiae serovar Lai (strain 56601) protein is Protein GrpE.